We begin with the raw amino-acid sequence, 367 residues long: Probable butyrate kinase (367 aa).

This sequence belongs to the acetokinase family.

It is found in the cytoplasm. The catalysed reaction is butanoate + ATP = butanoyl phosphate + ADP. This chain is Probable butyrate kinase, found in Bacillus cereus (strain B4264).